The chain runs to 326 residues: 4-hydroxythreonine-4-phosphate dehydrogenase (326 aa).

Thr-132 contributes to the substrate binding site. The a divalent metal cation site is built by His-160, His-205, and His-260. 3 residues coordinate substrate: Lys-268, Asn-277, and Arg-286.

This sequence belongs to the PdxA family. In terms of assembly, homodimer. The cofactor is Zn(2+). It depends on Mg(2+) as a cofactor. Co(2+) is required as a cofactor.

Its subcellular location is the cytoplasm. It carries out the reaction 4-(phosphooxy)-L-threonine + NAD(+) = 3-amino-2-oxopropyl phosphate + CO2 + NADH. The protein operates within cofactor biosynthesis; pyridoxine 5'-phosphate biosynthesis; pyridoxine 5'-phosphate from D-erythrose 4-phosphate: step 4/5. Catalyzes the NAD(P)-dependent oxidation of 4-(phosphooxy)-L-threonine (HTP) into 2-amino-3-oxo-4-(phosphooxy)butyric acid which spontaneously decarboxylates to form 3-amino-2-oxopropyl phosphate (AHAP). In Stenotrophomonas maltophilia (strain K279a), this protein is 4-hydroxythreonine-4-phosphate dehydrogenase.